A 580-amino-acid chain; its full sequence is 2-hydroxyacyl-CoA lyase 1 (580 aa).

Residue Glu47 participates in thiamine diphosphate binding. Residues 413–494 (TMDIGRLCIP…FIVLNNNGVY (82 aa)) are thiamine pyrophosphate binding. Residues Asp463 and Asn490 each contribute to the Mg(2+) site.

This sequence belongs to the TPP enzyme family. In terms of assembly, homotetramer. Requires Mg(2+) as cofactor. It depends on thiamine diphosphate as a cofactor.

Its subcellular location is the peroxisome. The catalysed reaction is a 2-hydroxy-3-methyl fatty acyl-CoA = a 2-methyl-branched fatty aldehyde + formyl-CoA. It carries out the reaction an (R)-2-hydroxy-long-chain-fatty acyl-CoA = a long-chain fatty aldehyde + formyl-CoA. The enzyme catalyses 2-hydroxy-3-methylhexadecanoyl-CoA = 2-methylpentadecanal + formyl-CoA. It catalyses the reaction 2-hydroxyoctadecanoyl-CoA = heptadecanal + formyl-CoA. Functionally, peroxisomal 2-OH acyl-CoA lyase involved in the cleavage (C1 removal) reaction in the fatty acid alpha-oxydation in a thiamine pyrophosphate (TPP)-dependent manner. Involved in the degradation of 3-methyl-branched fatty acids and the shortening of 2-hydroxy long-chain fatty acids. The polypeptide is 2-hydroxyacyl-CoA lyase 1 (hacl1) (Dictyostelium discoideum (Social amoeba)).